A 36-amino-acid polypeptide reads, in one-letter code: Cecropin-D (36 aa).

A Lysine amide modification is found at Lys-36.

It belongs to the cecropin family.

It localises to the secreted. Functionally, cecropins have lytic and antibacterial activity against several Gram-positive and Gram-negative bacteria. The protein is Cecropin-D of Antheraea pernyi (Chinese oak silk moth).